A 215-amino-acid polypeptide reads, in one-letter code: Cytochrome b6 (215 aa).

The chain crosses the membrane as a helical span at residues 32 to 52 (IFYCLGGITLTCFLVQVATGF). Residue Cys35 participates in heme c binding. Heme b contacts are provided by His86 and His100. 3 helical membrane passes run 90 to 110 (ASMM…TGGF), 116 to 136 (LTWV…VTGY), and 186 to 206 (LHTF…FLMI). Heme b-binding residues include His187 and His202.

It belongs to the cytochrome b family. PetB subfamily. As to quaternary structure, the 4 large subunits of the cytochrome b6-f complex are cytochrome b6, subunit IV (17 kDa polypeptide, PetD), cytochrome f and the Rieske protein, while the 4 small subunits are PetG, PetL, PetM and PetN. The complex functions as a dimer. Heme b is required as a cofactor. The cofactor is heme c.

It localises to the plastid. The protein localises to the chloroplast thylakoid membrane. Functionally, component of the cytochrome b6-f complex, which mediates electron transfer between photosystem II (PSII) and photosystem I (PSI), cyclic electron flow around PSI, and state transitions. This Gossypium barbadense (Sea Island cotton) protein is Cytochrome b6.